The primary structure comprises 222 residues: Thiol:disulfide interchange protein DsbL (222 aa).

Residues M1 to A27 form the signal peptide. The 194-residue stretch at F28–S221 folds into the Thioredoxin domain. Residues C56 and C59 are joined by a disulfide bond.

It belongs to the thioredoxin family. DsbL subfamily. As to quaternary structure, interacts with DsbI.

It localises to the periplasm. Involved in disulfide-bond formation. Acts by transferring its disulfide bond to other proteins. Part of a redox system composed of DsbI and DsbL that mediates formation of an essential disulfide bond in AssT. The sequence is that of Thiol:disulfide interchange protein DsbL from Escherichia coli O6:H1 (strain CFT073 / ATCC 700928 / UPEC).